The chain runs to 392 residues: General receptor for phosphoinositides 1-associated scaffold protein (392 aa).

The disordered stretch occupies residues 1 to 50; it reads MTLRRLRKLQQKEEATAAPDPAGRAPDSEAARAAPLPSGPPAAAAPPGAP. The span at 37 to 49 shows a compositional bias: pro residues; the sequence is PSGPPAAAAPPGA. T76 bears the Phosphothreonine mark. S93 is modified (phosphoserine). In terms of domain architecture, PDZ spans 100-189; that stretch reads VLTLEKGDNQ…VLRLETLYGT (90 aa). The segment at 180 to 257 is interaction with PSCD3; it reads VLRLETLYGT…GAGLLPGSLP (78 aa). Position 236 is a phosphotyrosine (Y236). R269 is modified (omega-N-methylarginine). The interval 294-315 is disordered; sequence PQALPPPPPPARALGPSSAETP. The residue at position 384 (S384) is a Phosphoserine.

In terms of assembly, heteromer. Composed of TAMALIN, CYTH2 and at least one GRM1. Also interacts with GRM2, GRM3 and GRM5. Interacts with CYTH3. Highly expressed in brain, heart and lung, and to a lower extent in embryo, kidney and ovary.

Its subcellular location is the cytoplasm. The protein resides in the perinuclear region. It localises to the cell membrane. It is found in the postsynaptic cell membrane. Plays a role in intracellular trafficking and contributes to the macromolecular organization of group 1 metabotropic glutamate receptors (mGluRs) at synapses. The protein is General receptor for phosphoinositides 1-associated scaffold protein of Mus musculus (Mouse).